We begin with the raw amino-acid sequence, 253 residues long: Giant extracellular hemoglobin linker 1 chain (253 aa).

In terms of domain architecture, LDL-receptor class A spans H89 to I131. Intrachain disulfides connect C91–C105, C98–C118, and C112–C129.

In terms of assembly, disulfide-linked dimer of identical chains. A model is proposed for the subunit structure of the Tylorrhynchus hemoglobin, consisting of 216 polypeptide chains, 192 heme-containing chains, and 24 linker chains.

Functionally, acts as a linker for the assembly of heme-containing chains in the construction of giant hemoglobin. In Tylorrhynchus heterochetus (Japanese palolo worm), this protein is Giant extracellular hemoglobin linker 1 chain.